The chain runs to 574 residues: Sulfite reductase [NADPH] hemoprotein beta-component (574 aa).

[4Fe-4S] cluster contacts are provided by Cys439, Cys445, Cys484, and Cys488. Cys488 contributes to the siroheme binding site.

Belongs to the nitrite and sulfite reductase 4Fe-4S domain family. As to quaternary structure, alpha(8)-beta(8). The alpha component is a flavoprotein, the beta component is a hemoprotein. The cofactor is siroheme. Requires [4Fe-4S] cluster as cofactor.

It carries out the reaction hydrogen sulfide + 3 NADP(+) + 3 H2O = sulfite + 3 NADPH + 4 H(+). It participates in sulfur metabolism; hydrogen sulfide biosynthesis; hydrogen sulfide from sulfite (NADPH route): step 1/1. Component of the sulfite reductase complex that catalyzes the 6-electron reduction of sulfite to sulfide. This is one of several activities required for the biosynthesis of L-cysteine from sulfate. The sequence is that of Sulfite reductase [NADPH] hemoprotein beta-component from Paenibacillus sp. (strain JDR-2).